We begin with the raw amino-acid sequence, 46 residues long: Defensin Tk-AMP-D5 (46 aa).

Cystine bridges form between Cys-3-Cys-46, Cys-14-Cys-34, Cys-20-Cys-40, and Cys-24-Cys-42.

In terms of biological role, plant defense peptide. In Triticum kiharae (Wheat), this protein is Defensin Tk-AMP-D5.